The primary structure comprises 629 residues: Probable indole-3-acetic acid-amido synthetase GH3.4 (629 aa).

Belongs to the IAA-amido conjugating enzyme family. Expressed in flowers.

In terms of biological role, may catalyze the synthesis of indole-3-acetic acid (IAA)-amino acid conjugates, providing a mechanism for the plant to cope with the presence of excess auxin. This chain is Probable indole-3-acetic acid-amido synthetase GH3.4 (GH3.4), found in Oryza sativa subsp. japonica (Rice).